The following is a 101-amino-acid chain: ATP synthase subunit c (101 aa).

The next 2 helical transmembrane spans lie at 31-51 and 81-101; these read AFAYLGAGLAMIGVIGVGAGQ and AISETSSIYALLVALILIFVG.

Belongs to the ATPase C chain family. As to quaternary structure, F-type ATPases have 2 components, F(1) - the catalytic core - and F(0) - the membrane proton channel. F(1) has five subunits: alpha(3), beta(3), gamma(1), delta(1), epsilon(1). F(0) has three main subunits: a(1), b(2) and c(10-14). The alpha and beta chains form an alternating ring which encloses part of the gamma chain. F(1) is attached to F(0) by a central stalk formed by the gamma and epsilon chains, while a peripheral stalk is formed by the delta and b chains.

Its subcellular location is the cell membrane. Its function is as follows. F(1)F(0) ATP synthase produces ATP from ADP in the presence of a proton or sodium gradient. F-type ATPases consist of two structural domains, F(1) containing the extramembraneous catalytic core and F(0) containing the membrane proton channel, linked together by a central stalk and a peripheral stalk. During catalysis, ATP synthesis in the catalytic domain of F(1) is coupled via a rotary mechanism of the central stalk subunits to proton translocation. Key component of the F(0) channel; it plays a direct role in translocation across the membrane. A homomeric c-ring of between 10-14 subunits forms the central stalk rotor element with the F(1) delta and epsilon subunits. In Mesomycoplasma hyopneumoniae (strain J / ATCC 25934 / NCTC 10110) (Mycoplasma hyopneumoniae), this protein is ATP synthase subunit c.